Consider the following 207-residue polypeptide: Urease accessory protein UreG (207 aa).

Gly12–Thr19 lines the GTP pocket.

This sequence belongs to the SIMIBI class G3E GTPase family. UreG subfamily. Homodimer. UreD, UreF and UreG form a complex that acts as a GTP-hydrolysis-dependent molecular chaperone, activating the urease apoprotein by helping to assemble the nickel containing metallocenter of UreC. The UreE protein probably delivers the nickel.

It is found in the cytoplasm. Functionally, facilitates the functional incorporation of the urease nickel metallocenter. This process requires GTP hydrolysis, probably effectuated by UreG. The sequence is that of Urease accessory protein UreG from Cereibacter sphaeroides (strain ATCC 17025 / ATH 2.4.3) (Rhodobacter sphaeroides).